Here is a 222-residue protein sequence, read N- to C-terminus: Phosphoenolpyruvate guanylyltransferase (222 aa).

Residues threonine 134, glycine 150, and serine 153 each contribute to the phosphoenolpyruvate site.

Belongs to the CofC family.

The enzyme catalyses phosphoenolpyruvate + GTP + H(+) = enolpyruvoyl-2-diphospho-5'-guanosine + diphosphate. The protein operates within cofactor biosynthesis; coenzyme F420 biosynthesis. Functionally, guanylyltransferase that catalyzes the activation of phosphoenolpyruvate (PEP) as enolpyruvoyl-2-diphospho-5'-guanosine, via the condensation of PEP with GTP. It is involved in the biosynthesis of coenzyme F420, a hydride carrier cofactor. The chain is Phosphoenolpyruvate guanylyltransferase from Roseiflexus sp. (strain RS-1).